The primary structure comprises 155 residues: Keratin-associated protein 4-7 (155 aa).

Tandem repeats lie at residues 5–9, 24–28, 29–33, 34–38, 44–48, 49–53, 54–58, 59–63, 64–68, 69–73, 74–78, 79–83, 84–88, 89–93, 94–98, 99–103, 104–108, 109–113, 114–118, and 119–123. The tract at residues 5–123 is 20 X 5 AA repeats of C-C-[GIKRQVHEML]-[SPTRV]-[STVQRCP]; sequence CCGSVCSDQG…CCRPCCCLRP (119 aa).

This sequence belongs to the KRTAP type 4 family. Interacts with hair keratins. As to expression, expressed in the hair follicles.

In terms of biological role, in the hair cortex, hair keratin intermediate filaments are embedded in an interfilamentous matrix, consisting of hair keratin-associated proteins (KRTAP), which are essential for the formation of a rigid and resistant hair shaft through their extensive disulfide bond cross-linking with abundant cysteine residues of hair keratins. The matrix proteins include the high-sulfur and high-glycine-tyrosine keratins. The chain is Keratin-associated protein 4-7 (KRTAP4-7) from Homo sapiens (Human).